A 155-amino-acid chain; its full sequence is S-ribosylhomocysteine lyase (155 aa).

Fe cation is bound by residues H53, H57, and C121.

Belongs to the LuxS family. As to quaternary structure, homodimer. Fe cation serves as cofactor.

It carries out the reaction S-(5-deoxy-D-ribos-5-yl)-L-homocysteine = (S)-4,5-dihydroxypentane-2,3-dione + L-homocysteine. Involved in the synthesis of autoinducer 2 (AI-2) which is secreted by bacteria and is used to communicate both the cell density and the metabolic potential of the environment. The regulation of gene expression in response to changes in cell density is called quorum sensing. Catalyzes the transformation of S-ribosylhomocysteine (RHC) to homocysteine (HC) and 4,5-dihydroxy-2,3-pentadione (DPD). This chain is S-ribosylhomocysteine lyase, found in Thermus thermophilus (strain ATCC BAA-163 / DSM 7039 / HB27).